The primary structure comprises 157 residues: 3-dehydroquinate dehydratase (157 aa).

The active-site Proton acceptor is Tyr-24. Substrate contacts are provided by Asn-75, His-81, and Asp-88. The Proton donor role is filled by His-101. Residues 102 to 103 (LS) and Arg-112 each bind substrate.

It belongs to the type-II 3-dehydroquinase family. As to quaternary structure, homododecamer.

The enzyme catalyses 3-dehydroquinate = 3-dehydroshikimate + H2O. The protein operates within metabolic intermediate biosynthesis; chorismate biosynthesis; chorismate from D-erythrose 4-phosphate and phosphoenolpyruvate: step 3/7. Catalyzes a trans-dehydration via an enolate intermediate. The sequence is that of 3-dehydroquinate dehydratase from Brucella canis (strain ATCC 23365 / NCTC 10854 / RM-666).